Here is a 90-residue protein sequence, read N- to C-terminus: DNA-directed RNA polymerase subunit omega (90 aa).

This sequence belongs to the RNA polymerase subunit omega family. The RNAP catalytic core consists of 2 alpha, 1 beta, 1 beta' and 1 omega subunit. When a sigma factor is associated with the core the holoenzyme is formed, which can initiate transcription.

The enzyme catalyses RNA(n) + a ribonucleoside 5'-triphosphate = RNA(n+1) + diphosphate. Its function is as follows. Promotes RNA polymerase assembly. Latches the N- and C-terminal regions of the beta' subunit thereby facilitating its interaction with the beta and alpha subunits. The sequence is that of DNA-directed RNA polymerase subunit omega from Rhodopirellula baltica (strain DSM 10527 / NCIMB 13988 / SH1).